We begin with the raw amino-acid sequence, 566 residues long: Myo-inositol transporter 1A (566 aa).

Residues Met1–Val64 are Cytoplasmic-facing. Residues Val65–Ile85 traverse the membrane as a helical segment. The Extracellular portion of the chain corresponds to Ser86–Glu106. The helical transmembrane segment at Trp107–Ala127 threads the bilayer. Residues Asp128–Asp140 lie on the Cytoplasmic side of the membrane. The chain crosses the membrane as a helical span at residues Val141–Val161. Topologically, residues Gly162–Arg163 are extracellular. The chain crosses the membrane as a helical span at residues Ala164–Val184. Residues Ala185–Ala192 are Cytoplasmic-facing. The chain crosses the membrane as a helical span at residues Leu193–Ile213. Topologically, residues Pro214 to Arg222 are extracellular. Residues Ile223–Pro243 form a helical membrane-spanning segment. The Cytoplasmic portion of the chain corresponds to Glu244 to Pro313. The helical transmembrane segment at Ala314–Tyr334 threads the bilayer. Over Tyr335 to Thr349 the chain is Extracellular. Residues Ser350–Leu370 traverse the membrane as a helical segment. Residues Asp371–Arg377 lie on the Cytoplasmic side of the membrane. The chain crosses the membrane as a helical span at residues Ile378 to Trp398. Residues Lys399–Met421 are Extracellular-facing. Residues Met422–Trp442 traverse the membrane as a helical segment. The Cytoplasmic segment spans residues Thr443–Ser458. The helical transmembrane segment at Ile459 to Met479 threads the bilayer. At Asn480–Thr485 the chain is on the extracellular side. The chain crosses the membrane as a helical span at residues Pro486–Tyr506. Residues Pro507–Val566 are Cytoplasmic-facing. Positions Asp546–Val566 are disordered. Polar residues predominate over residues Ala556–Val566.

Belongs to the major facilitator superfamily. Sugar transporter (TC 2.A.1.1) family.

It is found in the cell membrane. The enzyme catalyses myo-inositol(out) + H(+)(out) = myo-inositol(in) + H(+)(in). In terms of biological role, major transporter for myo-inositol. Plays a role in the traversal of the host blood-brain barrier. In Cryptococcus neoformans var. grubii serotype A (strain H99 / ATCC 208821 / CBS 10515 / FGSC 9487) (Filobasidiella neoformans var. grubii), this protein is Myo-inositol transporter 1A.